Reading from the N-terminus, the 2925-residue chain is TPR and ankyrin repeat-containing protein 1 (2925 aa).

TPR repeat units lie at residues 15–48 and 50–82; these read AVLLCNKSNAFFSLGKWNEAFVAAKECLQWDPTY and KGYYRAGYSLLRLHQPYEAARMFFEGLRLVQRS. ANK repeat units lie at residues 168 to 198, 203 to 232, 240 to 276, 463 to 492, 497 to 518, and 546 to 575; these read EKYVFIGLYEKMEQVPKLVQWLISIGASVET, PLHALMRLCIQARENHLFRWLMDHKPEWKG, DGCTVLHVVAAHSPGYLVKRQTEDVQMLLRFGADPTL, SQERPVVTCLKHEDFELAFLLLTKGADPRA, EGDTPLHAALHIFLEIKADIGF, and NGNTLMHILFQKGMLKRVKKLLDLLVKFDI. Disordered stretches follow at residues 612–669, 706–741, and 1077–1103; these read SRQD…LPGT, PEDCLQSSEPLEAGAGKEGKKDDKPTLGAGAPDCSE, and VEPGKESPGGEEEEEEEDEEEEDSIEV. Positions 624–641 are enriched in polar residues; it reads SKSTAPGHTSQLKSQGSF. A compositionally biased stretch (basic and acidic residues) spans 720 to 730; the sequence is AGKEGKKDDKP. Residues 1085 to 1103 show a composition bias toward acidic residues; that stretch reads GGEEEEEEEDEEEEDSIEV. 2 TPR repeats span residues 1699-1732 and 1793-1826; these read PAEWIAQGDYYAKHQCWKVAAKCYQKGGAFEKEK and LGKIRDAAYFYKRSQCYKDAFRCFEQIQEFDLAL. A coiled-coil region spans residues 2301-2330; the sequence is EEFEKLLHQEEDNYNRELKALESEKDERGR.

The polypeptide is TPR and ankyrin repeat-containing protein 1 (TRANK1) (Homo sapiens (Human)).